The following is a 199-amino-acid chain: Phosphatidylethanolamine N-methyltransferase (199 aa).

Over 1-12 the chain is Lumenal; sequence MSWLLGYMDPTE. Positions 13 to 33 form an intramembrane region, helical; sequence PSFVAAVITIVFNPLFWNVVA. The Lumenal segment spans residues 34–45; sequence RWEQRTRKLSRA. The helical transmembrane segment at 46–66 threads the bilayer; that stretch reads FGSPHLACYSLGICILLLNIL. Over 67–93 the chain is Cytoplasmic; sequence RSHCFTQAMMSQPKMEGLDNHTTYFLG. Residues 94–114 form a helical membrane-spanning segment; that stretch reads LAFLGWGFVFVLSSFYALGFT. 98 to 100 lines the S-adenosyl-L-methionine pocket; sequence GWG. Topologically, residues 115–157 are lumenal; sequence GTFLGDYFGILKESRVTTFPFSVLDNPMYWGSTANYLGWALMH. The helical transmembrane segment at 158 to 178 threads the bilayer; the sequence is ASPTGLLLTVLVAIVYVVALL. Residues 179-199 lie on the Cytoplasmic side of the membrane; it reads YEEPFTAEIYRQKATRLHKRS. 180–181 lines the S-adenosyl-L-methionine pocket; that stretch reads EE.

Belongs to the class VI-like SAM-binding methyltransferase superfamily. PEMT/PEM2 methyltransferase family. Expressed in liver (at protein level).

It is found in the endoplasmic reticulum membrane. The protein resides in the mitochondrion membrane. It carries out the reaction a 1,2-diacyl-sn-glycero-3-phospho-N-methylethanolamine + S-adenosyl-L-methionine = a 1,2-diacyl-sn-glycero-3-phospho-N,N-dimethylethanolamine + S-adenosyl-L-homocysteine + H(+). It catalyses the reaction a 1,2-diacyl-sn-glycero-3-phospho-N,N-dimethylethanolamine + S-adenosyl-L-methionine = a 1,2-diacyl-sn-glycero-3-phosphocholine + S-adenosyl-L-homocysteine + H(+). The catalysed reaction is a 1,2-diacyl-sn-glycero-3-phosphoethanolamine + S-adenosyl-L-methionine = a 1,2-diacyl-sn-glycero-3-phospho-N-methylethanolamine + S-adenosyl-L-homocysteine + H(+). The enzyme catalyses 1,2-di-(9Z-octadecenoyl)-sn-glycero-3-phosphoethanolamine + S-adenosyl-L-methionine = 1,2-di-(9Z-octadecenoyl)-sn-glycero-3-phospho-N-methylethanolamine + S-adenosyl-L-homocysteine + H(+). It carries out the reaction 1,2-di-(9Z-octadecenoyl)-sn-glycero-3-phospho-N-methylethanolamine + S-adenosyl-L-methionine = 1,2-di-(9Z-octadecenoyl)-sn-glycero-3-phospho-N,N-dimethylethanolamine + S-adenosyl-L-homocysteine + H(+). It catalyses the reaction 1,2-di-(9Z-octadecenoyl)-sn-glycero-3-phospho-N,N-dimethylethanolamine + S-adenosyl-L-methionine = 1,2-di-(9Z-octadecenoyl)-sn-glycero-3-phosphocholine + S-adenosyl-L-homocysteine + H(+). The catalysed reaction is 1,2-di-(9Z,12Z-octadecadienoyl)-sn-glycero-3-phosphoethanolamine + S-adenosyl-L-methionine = 1,2-di-(9Z,12Z-octadecadienoyl)-sn-glycero-3-phospho-N-methylethanolamine + S-adenosyl-L-homocysteine + H(+). The enzyme catalyses 1,2-di-(9Z,12Z-octadecadienoyl)-sn-glycero-3-phospho-N-methylethanolamine + S-adenosyl-L-methionine = 1,2-di-(9Z,12Z-octadecadienoyl)-sn-glycero-3-phospho-N,N-dimethylethanolamine + S-adenosyl-L-homocysteine + H(+). It carries out the reaction 1,2-di-(9Z,12Z-octadecadienoyl)-sn-glycero-3-phospho-N,N-dimethylethanolamine + S-adenosyl-L-methionine = 1,2-di-(9Z,12Z-octadecadienoyl)-sn-glycero-3-phosphocholine + S-adenosyl-L-homocysteine + H(+). It catalyses the reaction 1,2-di-(9Z,12Z,15Z-octadecatrienoyl)-sn-glycero-3-phosphoethanolamine + S-adenosyl-L-methionine = 1,2-di-(9Z,12Z,15Z-octadecatrienoyl)-sn-glycero-3-phospho-N-methylethanolamine + S-adenosyl-L-homocysteine + H(+). The catalysed reaction is 1,2-di-(9Z,12Z,15Z-octadecatrienoyl)-sn-glycero-3-phospho-N-methylethanolamine + S-adenosyl-L-methionine = 1,2-di-(9Z,12Z,15Z-octadecatrienoyl)-sn-glycero-3-phospho-N,N-dimethylethanolamine + S-adenosyl-L-homocysteine + H(+). The enzyme catalyses 1,2-di-(9Z,12Z,15Z-octadecatrienoyl)-sn-glycero-3-phospho-N,N-dimethylethanolamine + S-adenosyl-L-methionine = 1,2-di-(9Z,12Z,15Z-octadecatrienoyl)-sn-glycero-3-phosphocholine + S-adenosyl-L-homocysteine + H(+). It carries out the reaction 1-hexadecanoyl-2-(4Z,7Z,10Z,13Z,16Z,19Z-docosahexaenoyl)-sn-glycero-3-phosphoethanolamine + S-adenosyl-L-methionine = 1-hexadecanoyl-2-(4Z,7Z,10Z,13Z,16Z,19Z-docosahexaenoyl)-sn-glycero-3-phospho-N-methylethanolamine + S-adenosyl-L-homocysteine + H(+). It catalyses the reaction 1-hexadecanoyl-2-(4Z,7Z,10Z,13Z,16Z,19Z-docosahexaenoyl)-sn-glycero-3-phospho-N-methylethanolamine + S-adenosyl-L-methionine = 1-hexadecanoyl-2-(4Z,7Z,10Z,13Z,16Z,19Z-docosahexaenoyl)-sn-glycero-3-phospho-N,N-dimethylethanolamine + S-adenosyl-L-homocysteine + H(+). The catalysed reaction is 1-hexadecanoyl-2-(4Z,7Z,10Z,13Z,16Z,19Z-docosahexaenoyl)-sn-glycero-3-phospho-N,N-dimethylethanolamine + S-adenosyl-L-methionine = 1-hexadecanoyl-2-(4Z,7Z,10Z,13Z,16Z,19Z-docosahexaenoyl)-sn-glycero-3-phosphocholine + S-adenosyl-L-homocysteine + H(+). It participates in phospholipid metabolism; phosphatidylcholine biosynthesis. Its function is as follows. Catalyzes the three sequential steps of the methylation pathway for the biosynthesis of phosphatidylcholine, a critical and essential component for membrane structure. Uses S-adenosylmethionine (S-adenosyl-L-methionine, SAM or AdoMet) as the methyl group donor for the methylation of phosphatidylethanolamine (1,2-diacyl-sn-glycero-3-phosphoethanolamine, PE) to phosphatidylmonomethylethanolamine (1,2-diacyl-sn-glycero-3-phospho-N-methylethanolamine, PMME), PMME to phosphatidyldimethylethanolamine (1,2-diacyl-sn-glycero-3-phospho-N,N-dimethylethanolamine, PDME), and PDME to phosphatidylcholine (1,2-diacyl-sn-glycero-3-phosphocholine, PC), producing S-adenosyl-L-homocysteine in each step. This chain is Phosphatidylethanolamine N-methyltransferase, found in Mus musculus (Mouse).